A 620-amino-acid polypeptide reads, in one-letter code: Chaperone protein HscA homolog (620 aa).

It belongs to the heat shock protein 70 family.

Its function is as follows. Chaperone involved in the maturation of iron-sulfur cluster-containing proteins. Has a low intrinsic ATPase activity which is markedly stimulated by HscB. The chain is Chaperone protein HscA homolog from Colwellia psychrerythraea (strain 34H / ATCC BAA-681) (Vibrio psychroerythus).